A 296-amino-acid chain; its full sequence is UPF0761 membrane protein YE0031 (296 aa).

A run of 7 helical transmembrane segments spans residues 44-64, 67-87, 108-128, 136-156, 185-205, 212-232, and 246-266; these read LLSL…FPMF, ISIK…GDII, GLIV…NIIW, LVFS…LVGA, LFPL…VPTV, ALIG…GFTM, and VLAV…IVLL.

Belongs to the UPF0761 family.

It is found in the cell inner membrane. This chain is UPF0761 membrane protein YE0031, found in Yersinia enterocolitica serotype O:8 / biotype 1B (strain NCTC 13174 / 8081).